The sequence spans 1387 residues: MSSLVSTPFTTATGVQKKLGAPVPLHSFLLSRRQPAAGAGRGRAAAAAIRCAVAGNGLFTQTKPEVRRVVPPEGDASRRGVPRVKVVYVVLEAQYQSSVTAAVRELNADPRRAAGFEVVGYLVEELRDEETYKTFCADLADANVFIGSLIFVEELALKVKDAVEKERDRMDAVLVFPSMPEVMRLNKLGSFSMSQLGQSKSPFFQLFKRKKNSGGFADSMLKLVRTLPKVLKYLPSDKAQDARLYILSLQFWLGGSPDNLQNFLKMIAVSYVPALKGADIKYDDPVLFLDAGIWHPLAPTMYDDVKEYLNWYGTRRDTNDKLKDPNAPVIGLVLQRSHIVTGDDGHYVAVIMELEAKGAKVIPIFAGGLDFSGPTQRYLVDPITGKPFVNAVVSLTGFALVGGPARQDHPKAIAALQKLDVPYIVALPLVFQTTEEWLNSTLGLHPIQVALQVALPELDGGMEPIVFAGRDPRTGKSHALHKRVEQLCTRAIRWAELKRKTKEEKKLAITVFSFPPDKGNVGTAAYLNVFNSIYSVLQDLKKDGYNVEGLPDTAEALIEEVIHDKEAQFNSPNLNVAYRMNVREYQSLTSYASLLEENWGKPPGNLNSDGENLLVYGKQYGNVFIGVQPTFGYEGDPMRLLFSKSASPHHGFAAYYTFVEKIFQADAVLHFGTHGSLEFMPGKQVGMSDACYPDSLIGNIPNIYYYAANNPSEATVAKRRSYANTISYLTPPAENAGLYKGLKQLSELISSYQSLKDTGRGPQIVSSIISTAKQCNLDKDVPLPEEGVELPPNERDLIVGKVYAKIMEIESRLLPCGLHVIGEPPSAIEAVATLVNIASLDRPEDEIYSLPNILAQTVGRNIEDVYRGSDKGILADVELLRQITEASRGAITAFVERTTNNKGQVVDVTNKLSTMLGFGLSEPWVQHLSKTKFIRADREKLRTLFTFLGECLKLIVADNELGSLKLALEGSYVEPGPGGDPIRNPKVLPTGKNIHALDPQAIPTTAALKSAKIVVDRLLERQKVDNGGKYPETIALVLWGTDNIKTYGESLAQVLWMIGVRPVADTFGRVNRVEPVSLEELGRPRIDVVVNCSGVFRDLFINQMNLLDRAVKMVAELDEPEEMNYVRKHAQEQARELGVSLREAATRVFSNASGSYSSNVNLAVENASWTDEKQLQDMYLSRKSFAFDCDAPGAGMREQRKTFELALATADATFQNLDSSEISLTDVSHYFDSDPTKLVQGLRKDGRAPSSYIADTTTANAQVRTLSETVRLDARTKLLNPKWYEGMMKSGYEGVREIEKRLTNTVGWSATSGQVDNWVYEEANATFIEDEAMRKRLMDTNPNSFRKLVQTFLEASGRGYWETSEENLEKLRELYSEVEDKIEGIDR.

A chloroplast-targeting transit peptide spans 1-50 (MSSLVSTPFTTATGVQKKLGAPVPLHSFLLSRRQPAAGAGRGRAAAAAIR).

Belongs to the Mg-chelatase subunit H family. The magnesium chelatase complex is a heterotrimer consisting of subunits CHLI, CHLD and CHLH.

Its subcellular location is the plastid. It is found in the chloroplast stroma. It localises to the chloroplast membrane. It catalyses the reaction protoporphyrin IX + Mg(2+) + ATP + H2O = Mg-protoporphyrin IX + ADP + phosphate + 3 H(+). It participates in porphyrin-containing compound metabolism; chlorophyll biosynthesis. Involved in chlorophyll biosynthesis. Catalyzes the insertion of magnesium ion into protoporphyrin IX to yield Mg-protoporphyrin IX. The reaction takes place in two steps, with an ATP-dependent activation followed by an ATP-dependent chelation step. May be involved in the plastid-to-nucleus retrograde signaling. The sequence is that of Magnesium-chelatase subunit ChlH, chloroplastic (CHLH) from Oryza sativa subsp. indica (Rice).